The chain runs to 183 residues: uncharacterized protein (183 aa).

A run of 4 helical transmembrane segments spans residues F26–Y48, L72–I91, I104–F121, and F125–L147.

It localises to the cell membrane. This is an uncharacterized protein from Aquifex aeolicus (strain VF5).